We begin with the raw amino-acid sequence, 152 residues long: UPF0260 protein BAB1_1496 (152 aa).

It belongs to the UPF0260 family.

The protein is UPF0260 protein BAB1_1496 of Brucella abortus (strain 2308).